A 298-amino-acid chain; its full sequence is Lipoyl synthase (298 aa).

Positions 43, 48, 54, 69, 73, 76, and 280 each coordinate [4Fe-4S] cluster. The Radical SAM core domain occupies 55-269 (FSSGTATFLI…AACGRGMGIP (215 aa)).

The protein belongs to the radical SAM superfamily. Lipoyl synthase family. Requires [4Fe-4S] cluster as cofactor.

The protein resides in the cytoplasm. It catalyses the reaction [[Fe-S] cluster scaffold protein carrying a second [4Fe-4S](2+) cluster] + N(6)-octanoyl-L-lysyl-[protein] + 2 oxidized [2Fe-2S]-[ferredoxin] + 2 S-adenosyl-L-methionine + 4 H(+) = [[Fe-S] cluster scaffold protein] + N(6)-[(R)-dihydrolipoyl]-L-lysyl-[protein] + 4 Fe(3+) + 2 hydrogen sulfide + 2 5'-deoxyadenosine + 2 L-methionine + 2 reduced [2Fe-2S]-[ferredoxin]. The protein operates within protein modification; protein lipoylation via endogenous pathway; protein N(6)-(lipoyl)lysine from octanoyl-[acyl-carrier-protein]: step 2/2. Its function is as follows. Catalyzes the radical-mediated insertion of two sulfur atoms into the C-6 and C-8 positions of the octanoyl moiety bound to the lipoyl domains of lipoate-dependent enzymes, thereby converting the octanoylated domains into lipoylated derivatives. The protein is Lipoyl synthase of Nitratidesulfovibrio vulgaris (strain ATCC 29579 / DSM 644 / CCUG 34227 / NCIMB 8303 / VKM B-1760 / Hildenborough) (Desulfovibrio vulgaris).